The sequence spans 154 residues: UPF0178 protein RC1_2062 (154 aa).

Belongs to the UPF0178 family.

The protein is UPF0178 protein RC1_2062 of Rhodospirillum centenum (strain ATCC 51521 / SW).